The chain runs to 205 residues: Adenylyl-sulfate kinase (205 aa).

Residue 31–38 (GLSGSGKS) coordinates ATP. The active-site Phosphoserine intermediate is the S105.

It belongs to the APS kinase family.

It catalyses the reaction adenosine 5'-phosphosulfate + ATP = 3'-phosphoadenylyl sulfate + ADP + H(+). It functions in the pathway sulfur metabolism; hydrogen sulfide biosynthesis; sulfite from sulfate: step 2/3. In terms of biological role, catalyzes the synthesis of activated sulfate. The polypeptide is Adenylyl-sulfate kinase (Shewanella halifaxensis (strain HAW-EB4)).